The chain runs to 562 residues: Dihydroxy-acid dehydratase (562 aa).

Asp80 is a Mg(2+) binding site. Cys121 serves as a coordination point for [2Fe-2S] cluster. Mg(2+) contacts are provided by Asp122 and Lys123. An N6-carboxylysine modification is found at Lys123. Residue Cys194 coordinates [2Fe-2S] cluster. Glu446 contributes to the Mg(2+) binding site. The Proton acceptor role is filled by Ser472.

This sequence belongs to the IlvD/Edd family. In terms of assembly, homodimer. Requires [2Fe-2S] cluster as cofactor. The cofactor is Mg(2+).

It carries out the reaction (2R)-2,3-dihydroxy-3-methylbutanoate = 3-methyl-2-oxobutanoate + H2O. It catalyses the reaction (2R,3R)-2,3-dihydroxy-3-methylpentanoate = (S)-3-methyl-2-oxopentanoate + H2O. Its pathway is amino-acid biosynthesis; L-isoleucine biosynthesis; L-isoleucine from 2-oxobutanoate: step 3/4. The protein operates within amino-acid biosynthesis; L-valine biosynthesis; L-valine from pyruvate: step 3/4. Functionally, functions in the biosynthesis of branched-chain amino acids. Catalyzes the dehydration of (2R,3R)-2,3-dihydroxy-3-methylpentanoate (2,3-dihydroxy-3-methylvalerate) into 2-oxo-3-methylpentanoate (2-oxo-3-methylvalerate) and of (2R)-2,3-dihydroxy-3-methylbutanoate (2,3-dihydroxyisovalerate) into 2-oxo-3-methylbutanoate (2-oxoisovalerate), the penultimate precursor to L-isoleucine and L-valine, respectively. This chain is Dihydroxy-acid dehydratase, found in Macrococcus caseolyticus (strain JCSC5402) (Macrococcoides caseolyticum).